The following is a 163-amino-acid chain: MKFFAVLALCIVGAIAHPLTSDEAALVKSSWAQVKHNEVDILYTVFKAYPDIQARFPQFAGKDLDSIKTSGQFATHATRIVSFFSELIALSGSESNLSAIYGLISKMGTDHKNRGITQTQFNEFRTALVSYISSNVSWGDNVAAAWTHALDNVYTAVFQIVTA.

Positions 1–16 (MKFFAVLALCIVGAIA) are cleaved as a signal peptide. Positions 18-162 (PLTSDEAALV…VYTAVFQIVT (145 aa)) constitute a Globin domain. Residues His-76 and His-111 each coordinate heme b.

It belongs to the globin family.

The chain is Globin CTT-Z (CTT-Z) from Chironomus thummi piger (Midge).